A 918-amino-acid polypeptide reads, in one-letter code: MFQKILTILFGSKYERDLKRLNPIVETINSFEVTIKAMDDETLSSQTKKFKERLASGETLDDILPEAFATVREVAYRTLGMRHFDVQMMGGISLHWGNISEMKTGEGKTLTSTLPIYLNSLSGEGVHVVTVNDYLAKRDANWMRPVFEFLKVSVGVIQHDMDHEERKVAYNSDITYGTNNEFGFDYLRDNMVSYKEHRVQRQHNFAIVDEVDSILIDEARTPLIISGPAEESTDKYLKVNKIIPKLVEGEDFEIDEKAKNVILSEAGVHHVEKLLEVDNLYHAENIELVHHVQQALKAHKIFFKDKDYVVQDGEVIIVDEFTGRLMKGRRYSDGLHQSLEAKEGVPIARESQTLASITFQNYFRIYKKLAGMTGTADTEAEEFKKIYNLDVIVIPSNLKIQRQDMPDRVYKTEREKFDAVVKDIQEKVSRKQPVLVGTISIEKSEVLSKLLFSHGIQHNVLNAKQHERESEIVANAGKPGAITIATNMAGRGTDIVLGGAPKYKDDLEKLDDKCDSLGIKNKEELEIIYSFRECLIKQKFDEAEGKISDVRNETIKKECIKILGDAKKWKVDHDFVIGAGGLHIIGSERHESRRIDNQLRGRSGRQGDPGSSRFYLSLQDDLMRIFGSDRIARIMDTLKMPEGQELEHSMVSNAIARAQKRVEGHNFDIRKHLLEYDDVMNRQRIYIYGIRNELLDKGNMSKTVFDFFDEVVENQVILYCEGNNADAWEIDSLNEWLQSLGIDHKIESKDFKKESNPQLKVFEVVSKLVKELYDYKVSSIGDEIWRSIERNVFLDILDHRWKEHLYAMDHLKEGIWTVGYGEKNPLIEYKLQGFKMFDQLVDNLKNEVVSFLLKIEVTESDKKQDDTSPKEYKKIGQEQRAEVDMFGNELKSNKTKPQVSSTTSSGGGSERRSSRRKK.

Residues glutamine 87, 105-109, and aspartate 494 each bind ATP; that span reads GEGKT. A compositionally biased stretch (basic and acidic residues) spans 863-883; the sequence is KQDDTSPKEYKKIGQEQRAEV. The segment at 863 to 918 is disordered; that stretch reads KQDDTSPKEYKKIGQEQRAEVDMFGNELKSNKTKPQVSSTTSSGGGSERRSSRRKK.

Belongs to the SecA family. In terms of assembly, monomer and homodimer. Part of the essential Sec protein translocation apparatus which comprises SecA, SecYEG and auxiliary proteins SecDF. Other proteins may also be involved.

Its subcellular location is the cell inner membrane. The protein localises to the cytoplasm. It carries out the reaction ATP + H2O + cellular proteinSide 1 = ADP + phosphate + cellular proteinSide 2.. In terms of biological role, part of the Sec protein translocase complex. Interacts with the SecYEG preprotein conducting channel. Has a central role in coupling the hydrolysis of ATP to the transfer of proteins into and across the cell membrane, serving as an ATP-driven molecular motor driving the stepwise translocation of polypeptide chains across the membrane. The chain is Protein translocase subunit SecA from Leptospira biflexa serovar Patoc (strain Patoc 1 / Ames).